Here is a 1187-residue protein sequence, read N- to C-terminus: DNA-directed RNA polymerase subunit beta (1187 aa).

Residues 1150-1187 (KDEDDDPASSADDLGFNIGARPDAAAKEDQKAEEPEYQ) form a disordered region. Basic and acidic residues predominate over residues 1173-1187 (AAAKEDQKAEEPEYQ).

The protein belongs to the RNA polymerase beta chain family. In terms of assembly, the RNAP catalytic core consists of 2 alpha, 1 beta, 1 beta' and 1 omega subunit. When a sigma factor is associated with the core the holoenzyme is formed, which can initiate transcription.

The enzyme catalyses RNA(n) + a ribonucleoside 5'-triphosphate = RNA(n+1) + diphosphate. Its function is as follows. DNA-dependent RNA polymerase catalyzes the transcription of DNA into RNA using the four ribonucleoside triphosphates as substrates. The protein is DNA-directed RNA polymerase subunit beta of Bifidobacterium longum subsp. infantis (strain ATCC 15697 / DSM 20088 / JCM 1222 / NCTC 11817 / S12).